The following is a 474-amino-acid chain: tRNA-2-methylthio-N(6)-dimethylallyladenosine synthase (474 aa).

An MTTase N-terminal domain is found at 3-120 (QKLHIKTWGC…LPEMINQIRG (118 aa)). [4Fe-4S] cluster is bound by residues cysteine 12, cysteine 49, cysteine 83, cysteine 157, cysteine 161, and cysteine 164. One can recognise a Radical SAM core domain in the interval 143 to 375 (KAEGPTAFVS…QQRINNQAAK (233 aa)). The region spanning 378–441 (RAMLGTEQRV…TNSLRGDVIR (64 aa)) is the TRAM domain.

This sequence belongs to the methylthiotransferase family. MiaB subfamily. Monomer. [4Fe-4S] cluster is required as a cofactor.

It is found in the cytoplasm. It carries out the reaction N(6)-dimethylallyladenosine(37) in tRNA + (sulfur carrier)-SH + AH2 + 2 S-adenosyl-L-methionine = 2-methylsulfanyl-N(6)-dimethylallyladenosine(37) in tRNA + (sulfur carrier)-H + 5'-deoxyadenosine + L-methionine + A + S-adenosyl-L-homocysteine + 2 H(+). In terms of biological role, catalyzes the methylthiolation of N6-(dimethylallyl)adenosine (i(6)A), leading to the formation of 2-methylthio-N6-(dimethylallyl)adenosine (ms(2)i(6)A) at position 37 in tRNAs that read codons beginning with uridine. This Actinobacillus succinogenes (strain ATCC 55618 / DSM 22257 / CCUG 43843 / 130Z) protein is tRNA-2-methylthio-N(6)-dimethylallyladenosine synthase.